Reading from the N-terminus, the 667-residue chain is Cylicin-1 (667 aa).

Disordered regions lie at residues 121–251 and 275–634; these read PYTH…SSNV and SQNN…ILPS. Over residues 129–172 the composition is skewed to basic and acidic residues; the sequence is KKAESKKYKDDKKETALKKISKKDTGPHEVDEKPKRRNKADKTP. Residues 173–182 are compositionally biased toward low complexity; it reads SKSSHGSQLS. Residues 187–197 show a composition bias toward basic and acidic residues; the sequence is SKSETNPESKD. Over residues 223 to 237 the composition is skewed to low complexity; sequence STSTKKYSKSSKNNS. Residues 238–251 are compositionally biased toward polar residues; that stretch reads DAVSETCSKNSSNV. 9 stretches are compositionally biased toward basic and acidic residues: residues 284 to 326, 345 to 371, 380 to 394, 417 to 431, 438 to 464, 483 to 506, 521 to 533, 549 to 558, and 583 to 593; these read KKDA…KDTE, SKKD…DAKK, SKKD…KDAE, GDSK…KDAV, SKKD…KEST, SKKD…KKAT, KKTEMFKSSD, and DSKKDAVEPKR. 9 repeat units span residues 287–305, 306–337, 338–368, 369–405, 406–442, 443–475, 476–516, 517–547, and 548–569. The 9 X approximate tandem repeats stretch occupies residues 287–569; it reads AKKDAKGKGS…ESEESLFKPG (283 aa). Positions 624–633 are enriched in pro residues; it reads PLPPCEPILP.

As to quaternary structure, interacts with proteins of spermatozoa head including ACTL7A, CCIN, FAM209A and SPACA1; the interactions may be necessary for proper acrosome attachment to the nuclear envelope. In terms of tissue distribution, testis.

Its subcellular location is the cytoplasm. The protein resides in the cytoskeleton. The protein localises to the perinuclear theca. It is found in the calyx. Its function is as follows. Plays a role in the establishment of normal sperm morphology during spermatogenesis and is required for acrosome attachment to the nuclear envelope. This Bos taurus (Bovine) protein is Cylicin-1 (CYLC1).